Here is a 411-residue protein sequence, read N- to C-terminus: MNKELLNCERVWLNVTPATLRPDLADYGLLEPHALGVHEGKIHALVPMQDLKGPYPAHWQDMKGKLATPGLIDCHTHLIFAGSRAEEFELRQKGVPYAEIARKGGGILSTVRATRAASEEQLFTLAAARIKSLIREGVTTVEIKSGYGLTLEDELKMLRVARRLGEALPIRVKTTLLAAHAVPPEYRDDPDSWVETICQEIIPAAAEAGLADAVDVFCEHIGFSLAQTEQVYLAADQYGLPVKGHMEQLSNLGGSALAANFGALSVDHLEHLDQEGIQALAHRGVVATLLPTAFYFLKETKLPPVAALRKAHVPMAVSSDINPGTAPIVSLRMAMNMACTLFGLTPVEAMVGVTRNAARALGEQERLGQLRVGMLADFLVWNCAHPAELSYLIGVDQLVSRVVNGEETLHG.

Fe(3+)-binding residues include histidine 75 and histidine 77. Zn(2+)-binding residues include histidine 75 and histidine 77. Residues arginine 84, tyrosine 147, and histidine 180 each contribute to the 4-imidazolone-5-propanoate site. An N-formimidoyl-L-glutamate-binding site is contributed by tyrosine 147. Residue histidine 245 coordinates Fe(3+). Histidine 245 contacts Zn(2+). Glutamine 248 is a 4-imidazolone-5-propanoate binding site. Aspartate 320 contributes to the Fe(3+) binding site. Residue aspartate 320 participates in Zn(2+) binding. Asparagine 322 and glycine 324 together coordinate N-formimidoyl-L-glutamate. Threonine 325 contributes to the 4-imidazolone-5-propanoate binding site.

It belongs to the metallo-dependent hydrolases superfamily. HutI family. Zn(2+) serves as cofactor. It depends on Fe(3+) as a cofactor.

It is found in the cytoplasm. The enzyme catalyses 4-imidazolone-5-propanoate + H2O = N-formimidoyl-L-glutamate. It participates in amino-acid degradation; L-histidine degradation into L-glutamate; N-formimidoyl-L-glutamate from L-histidine: step 3/3. Functionally, catalyzes the hydrolytic cleavage of the carbon-nitrogen bond in imidazolone-5-propanoate to yield N-formimidoyl-L-glutamate. It is the third step in the universal histidine degradation pathway. This is Imidazolonepropionase from Aeromonas salmonicida (strain A449).